Consider the following 161-residue polypeptide: ATP synthase subunit b 1 (161 aa).

A helical transmembrane segment spans residues 6–26; sequence ETWVAIAFVILMVVFGYLGVF.

Belongs to the ATPase B chain family. As to quaternary structure, F-type ATPases have 2 components, F(1) - the catalytic core - and F(0) - the membrane proton channel. F(1) has five subunits: alpha(3), beta(3), gamma(1), delta(1), epsilon(1). F(0) has three main subunits: a(1), b(2) and c(10-14). The alpha and beta chains form an alternating ring which encloses part of the gamma chain. F(1) is attached to F(0) by a central stalk formed by the gamma and epsilon chains, while a peripheral stalk is formed by the delta and b chains.

The protein localises to the cell inner membrane. Functionally, f(1)F(0) ATP synthase produces ATP from ADP in the presence of a proton or sodium gradient. F-type ATPases consist of two structural domains, F(1) containing the extramembraneous catalytic core and F(0) containing the membrane proton channel, linked together by a central stalk and a peripheral stalk. During catalysis, ATP synthesis in the catalytic domain of F(1) is coupled via a rotary mechanism of the central stalk subunits to proton translocation. Component of the F(0) channel, it forms part of the peripheral stalk, linking F(1) to F(0). The protein is ATP synthase subunit b 1 of Bradyrhizobium diazoefficiens (strain JCM 10833 / BCRC 13528 / IAM 13628 / NBRC 14792 / USDA 110).